We begin with the raw amino-acid sequence, 260 residues long: Phosphate import ATP-binding protein PstB 1 (260 aa).

In terms of domain architecture, ABC transporter spans 13 to 255 (VRVRDLNLWY…PHTKKAEDYI (243 aa)). 45–52 (GPSGCGKS) is a binding site for ATP.

Belongs to the ABC transporter superfamily. Phosphate importer (TC 3.A.1.7) family. In terms of assembly, the complex is composed of two ATP-binding proteins (PstB), two transmembrane proteins (PstC and PstA) and a solute-binding protein (PstS).

It is found in the cell inner membrane. The enzyme catalyses phosphate(out) + ATP + H2O = ADP + 2 phosphate(in) + H(+). Its function is as follows. Part of the ABC transporter complex PstSACB involved in phosphate import. Responsible for energy coupling to the transport system. This chain is Phosphate import ATP-binding protein PstB 1, found in Chromohalobacter salexigens (strain ATCC BAA-138 / DSM 3043 / CIP 106854 / NCIMB 13768 / 1H11).